Consider the following 1154-residue polypeptide: DNA-directed RNA polymerase, mitochondrial (1154 aa).

Residues 1 to 30 (MLRRKIQTYLSRSHIRRGLCGLRFFQTQRL) constitute a mitochondrion transit peptide. Residues 221 to 243 (ESENGKDQNGDSSLKEKQPDVET) form a disordered region. The segment covering 223 to 240 (ENGKDQNGDSSLKEKQPD) has biased composition (basic and acidic residues). Active-site residues include Asp-821, Lys-890, and Asp-1061.

This sequence belongs to the phage and mitochondrial RNA polymerase family.

Its subcellular location is the mitochondrion. It catalyses the reaction RNA(n) + a ribonucleoside 5'-triphosphate = RNA(n+1) + diphosphate. Functionally, DNA-dependent RNA polymerase catalyzes the transcription of DNA into RNA using the four ribonucleoside triphosphates as substrates. Combines in the mitochondrion with mitochondrial transcription factor mtf1 as a holoenzyme to recognize and initiate transcription at the core mitochondrial promoters. This Schizosaccharomyces pombe (strain 972 / ATCC 24843) (Fission yeast) protein is DNA-directed RNA polymerase, mitochondrial (rpo41).